Here is a 172-residue protein sequence, read N- to C-terminus: MERAIQGNDAREQANSERWDGGSGGTTSPFKLPDESPSWTEWRLHNDETNSNQDNPLGFKESWGFGKVVFKRYLRYDRTEASLHRVLGSWTGDSVNYAASRFFGFDQIGCTYSIRFRGVSITVSGGSRTLQHLCEMAIRSKQELLQLAPIEVESNVSRGCPEGTQTFEKEGE.

Residues 1–20 (MERAIQGNDAREQANSERWD) are compositionally biased toward basic and acidic residues. The interval 1–37 (MERAIQGNDAREQANSERWDGGSGGTTSPFKLPDESP) is disordered.

Belongs to the tombusvirus protein p19 family. As to quaternary structure, homodimer.

In terms of biological role, viral suppressor of RNA silencing which binds specifically to silencing RNAs (siRNAs). Acts as a molecular caliper to specifically select siRNAs based on the length of the duplex region of the RNA. The sequence is that of RNA silencing suppressor p19 from Tomato bushy stunt virus (strain Ja6) (TBSV).